A 464-amino-acid chain; its full sequence is Propanal dehydrogenase (CoA-propanoylating) (464 aa).

The targets protein to the BMC stretch occupies residues 1–18 (MNTSELETLIRTILSEQL).

The protein belongs to the EutE/PduP family. In terms of assembly, interacts with BMC shell proteins PduA and PduJ, which target this protein to BMC. Interacts with PduQ, probably via the N-terminus of PduQ. Interacts with PduK, probably with its BMC-containing N-terminus.

The protein localises to the bacterial microcompartment. The catalysed reaction is propanal + NAD(+) + CoA = propanoyl-CoA + NADH + H(+). It participates in polyol metabolism; 1,2-propanediol degradation. A CoA-acylating aldehyde dehydrogenase required for optimal 1,2-propanediol (1,2-PD) degradation. Optimizes growth in the bacterial microcompartment (BMC) dedicated to 1,2-PD degradation by minimizing propionaldehyde toxicity. Directly targeted to the BMC. NAD(+) and NADH are regenerated internally within the Pdu BMC by the PduP and PduQ enzymes, which reduce NAD(+) and oxidize NADH respectively, although there must also be cofactor transport across the BMC. Functionally, the 1,2-PD-specific bacterial microcompartment (BMC) concentrates low levels of 1,2-PD catabolic enzymes, concentrates volatile reaction intermediates thus enhancing pathway flux and keeps the level of toxic, mutagenic propionaldehyde low. The polypeptide is Propanal dehydrogenase (CoA-propanoylating) (Salmonella typhimurium (strain LT2 / SGSC1412 / ATCC 700720)).